The chain runs to 242 residues: DNA repair protein RecO (242 aa).

Belongs to the RecO family.

Functionally, involved in DNA repair and RecF pathway recombination. The sequence is that of DNA repair protein RecO from Wolbachia pipientis subsp. Culex pipiens (strain wPip).